Reading from the N-terminus, the 465-residue chain is Probable tRNA modification GTPase MnmE (465 aa).

Residues arginine 23, glutamate 85, and arginine 124 each coordinate (6S)-5-formyl-5,6,7,8-tetrahydrofolate. The TrmE-type G domain maps to 221–384 (GTKVCIIGKP…LNNCILDLSS (164 aa)). GTP contacts are provided by residues 231 to 236 (NVGKSS), 250 to 256 (TNFPGTT), and 275 to 278 (DTAG). Mg(2+) contacts are provided by serine 235 and threonine 256. Lysine 465 contacts (6S)-5-formyl-5,6,7,8-tetrahydrofolate.

The protein belongs to the TRAFAC class TrmE-Era-EngA-EngB-Septin-like GTPase superfamily. TrmE GTPase family. K(+) is required as a cofactor.

It is found in the plastid. The protein resides in the chloroplast. Exhibits a very high intrinsic GTPase hydrolysis rate. Involved in the addition of a carboxymethylaminomethyl (cmnm) group at the wobble position (U34) of certain tRNAs, forming tRNA-cmnm(5)s(2)U34. This is Probable tRNA modification GTPase MnmE from Cyanidium caldarium (Red alga).